Reading from the N-terminus, the 60-residue chain is Large ribosomal subunit protein eL37 (60 aa).

Zn(2+) contacts are provided by Cys-18, Cys-21, Cys-33, and Cys-36. The C4-type zinc finger occupies 18–36; the sequence is CRRCGKNSYHVRKKVCAAC.

The protein belongs to the eukaryotic ribosomal protein eL37 family. Requires Zn(2+) as cofactor.

Its function is as follows. Binds to the 23S rRNA. In Methanothermobacter thermautotrophicus (strain ATCC 29096 / DSM 1053 / JCM 10044 / NBRC 100330 / Delta H) (Methanobacterium thermoautotrophicum), this protein is Large ribosomal subunit protein eL37 (rpl37e).